Consider the following 115-residue polypeptide: uncharacterized protein (115 aa).

3 helical membrane-spanning segments follow: residues 7–27, 40–60, and 72–92; these read TLIFFPLILQIVVTALLIWFD, YALTAFLLAAIPAFLTALLAA, and IVLVSSIISFVYCNMASYFYL.

It is found in the cell membrane. This is an uncharacterized protein from Haemophilus influenzae (strain ATCC 51907 / DSM 11121 / KW20 / Rd).